The sequence spans 103 residues: Gibberellin-regulated protein 13 (103 aa).

The first 20 residues, 1–20, serve as a signal peptide directing secretion; the sequence is MATKLSIIVFSIVVLHLLLS.

It belongs to the GASA family. Post-translationally, six disulfide bonds may be present.

It is found in the secreted. Gibberellin-regulated protein that may function in hormonal controlled steps of development such as seed germination, flowering and seed maturation. This Arabidopsis thaliana (Mouse-ear cress) protein is Gibberellin-regulated protein 13 (GASA13).